A 653-amino-acid polypeptide reads, in one-letter code: Alpha-L-iduronidase (653 aa).

Residues 1-27 (MRPLRPRAALLALLASLLAAPPVAPAE) form the signal peptide. Residues P54, L56, and H58 each contribute to the alpha-D-mannopyranose site. H91 provides a ligand contact to alpha-L-iduronate. N110 carries an N-linked (GlcNAc...) asparagine glycan. Residues N181 and E182 each contribute to the alpha-L-iduronate site. E182 acts as the Proton donor in catalysis. N-linked (GlcNAc...) asparagine glycosylation occurs at N190. 3 residues coordinate alpha-L-iduronate: K264, E299, and G305. The Nucleophile role is filled by E299. W306 provides a ligand contact to alpha-D-mannopyranose. N-linked (GlcNAc...) asparagine glycosylation occurs at N336. Alpha-L-iduronate is bound by residues D349 and R363. Residues N372, N415, and N451 are each glycosylated (N-linked (GlcNAc...) asparagine). Residues R488 and R492 each contribute to the alpha-D-mannopyranose site. Residue R492 participates in beta-D-mannose binding. C541 and C577 form a disulfide bridge.

Belongs to the glycosyl hydrolase 39 family. Monomer. N-glycosylation at Asn-372 contributes to substrate binding and is required for full enzymatic activity. As to expression, ubiquitous.

The protein resides in the lysosome. The catalysed reaction is Hydrolysis of unsulfated alpha-L-iduronosidic linkages in dermatan sulfate.. In Homo sapiens (Human), this protein is Alpha-L-iduronidase (IDUA).